The sequence spans 577 residues: Arginine--tRNA ligase (577 aa).

Residues 122-132 (PNVAKEMHVGH) carry the 'HIGH' region motif.

The protein belongs to the class-I aminoacyl-tRNA synthetase family. In terms of assembly, monomer.

It localises to the cytoplasm. The catalysed reaction is tRNA(Arg) + L-arginine + ATP = L-arginyl-tRNA(Arg) + AMP + diphosphate. This chain is Arginine--tRNA ligase, found in Escherichia coli O8 (strain IAI1).